The primary structure comprises 396 residues: Elongation factor Tu (396 aa).

Residues 10–206 (KPHVNVGTIG…ALDSYIPDPE (197 aa)) form the tr-type G domain. The segment at 19–26 (GHVDHGKT) is G1. 19-26 (GHVDHGKT) is a GTP binding site. Mg(2+) is bound at residue T26. Residues 60-64 (GITIN) are G2. The G3 stretch occupies residues 81–84 (DCPG). GTP is bound by residues 81–85 (DCPGH) and 136–139 (NKCD). The G4 stretch occupies residues 136-139 (NKCD). A G5 region spans residues 174-176 (SAL).

The protein belongs to the TRAFAC class translation factor GTPase superfamily. Classic translation factor GTPase family. EF-Tu/EF-1A subfamily. In terms of assembly, monomer.

It is found in the cytoplasm. It carries out the reaction GTP + H2O = GDP + phosphate + H(+). Its function is as follows. GTP hydrolase that promotes the GTP-dependent binding of aminoacyl-tRNA to the A-site of ribosomes during protein biosynthesis. This is Elongation factor Tu from Dechloromonas aromatica (strain RCB).